The following is a 510-amino-acid chain: NAD(P)H-quinone oxidoreductase subunit 2 A, chloroplastic (510 aa).

14 consecutive transmembrane segments (helical) span residues 31–51 (FIFP…IDLT), 59–79 (WFYF…LFRW), 99–119 (IFQF…VEYI), 124–144 (MAIT…MFLC), 149–169 (LITI…LSGY), 184–204 (LLMG…LYGL), 229–249 (ISIA…LAPF), 261–281 (PTPV…ALAT), 295–315 (WHLL…LLAI), 323–343 (MLAY…IVGD), 354–374 (YMLF…LFGL), 395–415 (ALSL…AGFF), 418–438 (LYLF…IGLL), and 484–504 (MTVC…ILAI).

The protein belongs to the complex I subunit 2 family. As to quaternary structure, NDH is composed of at least 16 different subunits, 5 of which are encoded in the nucleus.

Its subcellular location is the plastid. It is found in the chloroplast thylakoid membrane. It catalyses the reaction a plastoquinone + NADH + (n+1) H(+)(in) = a plastoquinol + NAD(+) + n H(+)(out). The enzyme catalyses a plastoquinone + NADPH + (n+1) H(+)(in) = a plastoquinol + NADP(+) + n H(+)(out). In terms of biological role, NDH shuttles electrons from NAD(P)H:plastoquinone, via FMN and iron-sulfur (Fe-S) centers, to quinones in the photosynthetic chain and possibly in a chloroplast respiratory chain. The immediate electron acceptor for the enzyme in this species is believed to be plastoquinone. Couples the redox reaction to proton translocation, and thus conserves the redox energy in a proton gradient. The protein is NAD(P)H-quinone oxidoreductase subunit 2 A, chloroplastic of Saccharum hybrid (Sugarcane).